We begin with the raw amino-acid sequence, 128 residues long: Z-ring associated protein G (128 aa).

Residues 7–27 (EIWFSISIAFLIGTLCGVLVM) traverse the membrane as a helical segment. The stretch at 37–75 (QIQLKSELASAEAKIEEQKQQLERHFEQSANLLENLAED) forms a coiled coil. Residues 105–128 (NHANGDEDNQPRDYSDGSSGLLKS) are disordered. Residues 107–119 (ANGDEDNQPRDYS) are compositionally biased toward basic and acidic residues.

The protein belongs to the ZapG family. As to quaternary structure, homotetramer. In solution, is primarily monomeric but forms small amounts of stable tetramer and hexadecamer. The crystal structure of the cytosolic region shows a coiled-coil tetramer in the asymmetric unit that is very likely to be a physiologically relevant assembly of the protein.

It localises to the cell inner membrane. Its function is as follows. Involved in cell division, cell envelope biogenesis and cell shape maintenance. This chain is Z-ring associated protein G, found in Haemophilus ducreyi (strain 35000HP / ATCC 700724).